A 453-amino-acid polypeptide reads, in one-letter code: DNA repair protein RadA (453 aa).

A C4-type zinc finger spans residues 10-27 (CQECGYQSPKYLGRCPNC). 95–102 (GDPGIGKS) is a binding site for ATP. The RadA KNRFG motif signature appears at 251 to 255 (KNRFG). The tract at residues 350–453 (DAYLKSAGGV…VGQVLKAVFS (104 aa)) is lon-protease-like.

It belongs to the RecA family. RadA subfamily.

In terms of biological role, DNA-dependent ATPase involved in processing of recombination intermediates, plays a role in repairing DNA breaks. Stimulates the branch migration of RecA-mediated strand transfer reactions, allowing the 3' invading strand to extend heteroduplex DNA faster. Binds ssDNA in the presence of ADP but not other nucleotides, has ATPase activity that is stimulated by ssDNA and various branched DNA structures, but inhibited by SSB. Does not have RecA's homology-searching function. The sequence is that of DNA repair protein RadA from Streptococcus pyogenes serotype M6 (strain ATCC BAA-946 / MGAS10394).